The sequence spans 122 residues: Large ribosomal subunit protein uL14 (122 aa).

The protein belongs to the universal ribosomal protein uL14 family. Part of the 50S ribosomal subunit. Forms a cluster with proteins L3 and L19. In the 70S ribosome, L14 and L19 interact and together make contacts with the 16S rRNA in bridges B5 and B8.

Its function is as follows. Binds to 23S rRNA. Forms part of two intersubunit bridges in the 70S ribosome. This chain is Large ribosomal subunit protein uL14, found in Polaromonas naphthalenivorans (strain CJ2).